Here is a 501-residue protein sequence, read N- to C-terminus: MLELPGARACAGALAGALLLLLFVLVVRQLLRQRRPAGFPPGPPRLPFVGNICSLALSADLPHVYMRKQSRVYGEIFSLDLGGISTVVLNGYDVVKECLVHQSEIFADRPCLPLFMKMTKMGGLLNSRYGRGWIDHRRLAVNSFHYFGSGQKSFESKILEETWSLIDAIETYKGGPFDLKQLITNAVSNITNLILFGERFTYEDTDFQHMIELFSENVELAASAPVFLYNAFPWIGILPFGKHQRLFRNADVVYDFLSRLIEKAAVNRKPHLPHHFVDAYLDEMDQGQNDPLSTFSKENLIFSVGELIIAGTETTTNVLRWAILFMALYPNIQGQVHKEIDLIVGHNRRPSWEYKCKMPYTEAVLHEVLRFCNIVPLGIFHATSEDAVVRGYSIPKGTTVITNLYSVHFDEKYWKDPDMFYPERFLDSNGYFTKKEALIPFSLGRRHCLGEQLARMEMFLFFTSLLQQFHLHFPHELVPNLKPRLGMTLQPQPYLICAERR.

A substrate-binding site is contributed by Ala250. Residue Cys448 coordinates heme.

The protein belongs to the cytochrome P450 family. Homodimer. Requires heme as cofactor. In terms of tissue distribution, highly expressed in the liver and testis.

The protein localises to the endoplasmic reticulum membrane. The protein resides in the microsome membrane. The catalysed reaction is calciol + reduced [NADPH--hemoprotein reductase] + O2 = calcidiol + oxidized [NADPH--hemoprotein reductase] + H2O + H(+). It carries out the reaction vitamin D2 + reduced [NADPH--hemoprotein reductase] + O2 = 25-hydroxyvitamin D2 + oxidized [NADPH--hemoprotein reductase] + H2O + H(+). The enzyme catalyses 1alpha-hydroxyvitamin D2 + reduced [NADPH--hemoprotein reductase] + O2 = 1alpha,25-dihydroxyvitamin D2 + oxidized [NADPH--hemoprotein reductase] + H2O + H(+). It catalyses the reaction alfacalcidol + reduced [NADPH--hemoprotein reductase] + O2 = calcitriol + oxidized [NADPH--hemoprotein reductase] + H2O + H(+). Its pathway is hormone biosynthesis; vitamin D biosynthesis. Its function is as follows. A cytochrome P450 monooxygenase involved in activation of vitamin D precursors. Catalyzes hydroxylation at C-25 of both forms of vitamin D, vitamin D(2) and D(3) (calciol). Can metabolize vitamin D analogs/prodrugs 1alpha-hydroxyvitamin D(2) (doxercalciferol) and 1alpha-hydroxyvitamin D(3) (alfacalcidol) forming 25-hydroxy derivatives. Mechanistically, uses molecular oxygen inserting one oxygen atom into a substrate, and reducing the second into a water molecule, with two electrons provided by NADPH via cytochrome P450 reductase (CPR; NADPH-ferrihemoprotein reductase). The chain is Vitamin D 25-hydroxylase (Cyp2r1) from Mus musculus (Mouse).